We begin with the raw amino-acid sequence, 326 residues long: Olfactory receptor 11H1 (326 aa).

The Extracellular portion of the chain corresponds to 1 to 44; sequence MCPLTLQVTGLMNVSEPNSSFAFVNEFILQGFSCEWTIQIFLFS. N-linked (GlcNAc...) asparagine glycosylation is found at Asn-13 and Asn-18. The chain crosses the membrane as a helical span at residues 45 to 65; it reads LFTTTYALTITGNGAIAFVLW. Residues 66 to 72 lie on the Cytoplasmic side of the membrane; that stretch reads CDRRLHT. The helical transmembrane segment at 73 to 93 threads the bilayer; it reads PMYMFLGNFSFLEIWYVSSTV. At 94 to 112 the chain is on the extracellular side; the sequence is PKMLVNFLSEKKNISFAGC. The N-linked (GlcNAc...) asparagine glycan is linked to Asn-106. A disulfide bond links Cys-112 and Cys-194. Residues 113 to 133 form a helical membrane-spanning segment; sequence FLQFYFFFSLGTSECLLLTVM. Over 134–158 the chain is Cytoplasmic; that stretch reads AFDQYLAICRPLLYPNIMTGHLYAK. Residues 159–179 traverse the membrane as a helical segment; it reads LVILCWVCGFLWFLIPIVLIS. Residues 180–216 lie on the Extracellular side of the membrane; that stretch reads QMPFCGPNIIDHVVCDPGPRFALDCVSAPRIQLFCYT. The helical transmembrane segment at 217 to 237 threads the bilayer; the sequence is LSSLVIFGNFLFIIGSYTLVL. The Cytoplasmic segment spans residues 238–259; sequence KAMLGMPSSTGRHKAFSTCGSH. The helical transmembrane segment at 260–280 threads the bilayer; that stretch reads LAVVSLCYSSLMVMYVSPGLG. At 281–287 the chain is on the extracellular side; sequence HSTGMQK. A helical transmembrane segment spans residues 288–308; it reads IETLFYAMVTPLFNPLIYSLQ. The Cytoplasmic segment spans residues 309 to 326; that stretch reads NKEIKAALRKVLGSSNII.

It belongs to the G-protein coupled receptor 1 family.

Its subcellular location is the cell membrane. In terms of biological role, odorant receptor. This is Olfactory receptor 11H1 (OR11H1) from Homo sapiens (Human).